A 62-amino-acid chain; its full sequence is Small EDRK-rich factor 1 (62 aa).

Basic and acidic residues-rich tracts occupy residues 1–30 (MARG…KEDS) and 50–62 (AANE…TREK). A disordered region spans residues 1-62 (MARGNQRELA…ERKSMQTREK (62 aa)).

This sequence belongs to the SERF family. As to quaternary structure, interacts with SNCA; this interaction promotes the aggregation of SNCA.

It is found in the cytoplasm. The protein resides in the cytosol. Its subcellular location is the nucleus. Functionally, positive regulator of amyloid protein aggregation and proteotoxicity. Induces conformational changes in amyloid proteins, such as APP, HTT, and SNCA, driving them into compact formations preceding the formation of aggregates. The sequence is that of Small EDRK-rich factor 1 (SERF1) from Bos taurus (Bovine).